The sequence spans 275 residues: NADPH-dependent 7-cyano-7-deazaguanine reductase (275 aa).

Residue 81 to 83 (VES) coordinates substrate. 83–84 (SK) is an NADPH binding site. C182 acts as the Thioimide intermediate in catalysis. D189 (proton donor) is an active-site residue. 221 to 222 (HE) lines the substrate pocket. Position 250 to 251 (250 to 251 (RG)) interacts with NADPH.

This sequence belongs to the GTP cyclohydrolase I family. QueF type 2 subfamily. In terms of assembly, homodimer.

The protein resides in the cytoplasm. The enzyme catalyses 7-aminomethyl-7-carbaguanine + 2 NADP(+) = 7-cyano-7-deazaguanine + 2 NADPH + 3 H(+). The protein operates within tRNA modification; tRNA-queuosine biosynthesis. Its function is as follows. Catalyzes the NADPH-dependent reduction of 7-cyano-7-deazaguanine (preQ0) to 7-aminomethyl-7-deazaguanine (preQ1). This is NADPH-dependent 7-cyano-7-deazaguanine reductase from Polaromonas sp. (strain JS666 / ATCC BAA-500).